We begin with the raw amino-acid sequence, 360 residues long: MDIGIFIPIGNNGWLISSNAPQYMPTFELNKQIVQKAEGYGFDFALSMIKLRGFGGKTQFWEHNLESFTLMAGLAAVTSRIQLFATVATLTIPPAIAARMASTIDSISNGRFGINLVTGWQKPEYEQMGLWPGDEFFHTRYEYLAEYAQVLRDLWATGSSDFKGEHFSMQDCRVSPRPQADMKLICAGQSEAGMAFSAQYADYNFCFGKGVNTPTAFAPTAQKLLEANEKTGRNVTSCVLFMIIADDTDEAARARWEHIKDGADEEAIAWLSEKGSADKSAGSNLRQMADPTSAVNINMGTLVGSWATVARMLDEVASVPGTQGVMLTFDDFVKGVEDFGEKIQPLMTSRKHIAQLKEVV.

Residues 49–50 (IK), Asn-115, Glu-124, 140–141 (RY), and Ser-190 contribute to the FMN site.

It belongs to the NtaA/SnaA/DszA monooxygenase family. RutA subfamily.

The enzyme catalyses uracil + FMNH2 + NADH + O2 = (Z)-3-ureidoacrylate + FMN + NAD(+) + H2O + H(+). It carries out the reaction thymine + FMNH2 + NADH + O2 = (Z)-2-methylureidoacrylate + FMN + NAD(+) + H2O + H(+). Its function is as follows. Catalyzes the pyrimidine ring opening between N-3 and C-4 by an unusual flavin hydroperoxide-catalyzed mechanism, adding oxygen atoms in the process to yield ureidoacrylate peracid, that immediately reacts with FMN forming ureidoacrylate and FMN-N(5)-oxide. The FMN-N(5)-oxide reacts spontaneously with NADH to produce FMN. Requires the flavin reductase RutF to regenerate FMN in vivo. This chain is Pyrimidine monooxygenase RutA, found in Pseudomonas syringae pv. syringae (strain B728a).